The chain runs to 83 residues: Cobrotoxin homolog (83 aa).

The N-terminal stretch at 1 to 21 (METLLLTLLVVTIVCLDLGYT) is a signal peptide. 4 cysteine pairs are disulfide-bonded: Cys-24–Cys-45, Cys-38–Cys-62, Cys-64–Cys-75, and Cys-76–Cys-81.

Belongs to the three-finger toxin family. Short-chain subfamily. Type I alpha-neurotoxin sub-subfamily. As to expression, expressed by the venom gland.

It is found in the secreted. Functionally, binds to muscle nicotinic acetylcholine receptor (nAChR) and inhibit acetylcholine from binding to the receptor, thereby impairing neuromuscular transmission. This chain is Cobrotoxin homolog, found in Naja naja (Indian cobra).